The sequence spans 171 residues: UPF0312 protein SAOUHSC_03022 (171 aa).

The protein belongs to the UPF0312 family.

The polypeptide is UPF0312 protein SAOUHSC_03022 (Staphylococcus aureus (strain NCTC 8325 / PS 47)).